We begin with the raw amino-acid sequence, 357 residues long: Hydroxyproline O-arabinosyltransferase RDN1 (357 aa).

Residues 13-33 (LLMLLMVLGFSFATYNLVFMM) traverse the membrane as a helical; Signal-anchor segment.

Expressed in the vasculature of leaves, petioles, stems and roots. Expressed in the vascular cylinder throughout the root, and nodule vasculature.

The protein resides in the golgi apparatus membrane. It catalyses the reaction trans-4-hydroxy-L-prolyl-[protein] + UDP-beta-L-arabinofuranose = O-(beta-L-arabinofuranosyl)-trans-4-hydroxy-L-prolyl-[protein] + UDP + H(+). In terms of biological role, probable glycosyltransferase involved in the O-arabinosylation of several proteins including extensins and small signaling peptides. Catalyzes the transfer of the initial L-arabinose to the hydroxyl group of Hyp residues. Probably involved in the arabinosylation of CLE12, a signaling peptide that moves from root to shoot, to interact with SUNN receptor kinase signaling that regulates nodulation. Involved in long distance nodulation signaling events. Involved in the autoregulation of nodulation (AON), a long distance systemic signaling from root to shoot and back again, which allows legumes to limit the number of root nodules formed based on available nitrogen and previous rhizobial colonization. Functions in the root, upstream of the shoot receptor kinase SUNN and via CLE peptide, to control AON. In Medicago truncatula (Barrel medic), this protein is Hydroxyproline O-arabinosyltransferase RDN1.